Reading from the N-terminus, the 218-residue chain is Glutathione S-transferase Mu 4 (218 aa).

A GST N-terminal domain is found at 2 to 88; sequence SMTLGYWDIR…YIARKHNLCG (87 aa). Residues 7–8, 46–50, 59–60, and 72–73 each bind glutathione; these read YW, WLNEK, NL, and QS. In terms of domain architecture, GST C-terminal spans 90–208; that stretch reads TEEEKIRVDI…KSSRFLPKPL (119 aa). Tyr-116 serves as a coordination point for substrate.

Belongs to the GST superfamily. Mu family. Homodimer. As to expression, expressed in a wide variety of tissues.

The protein resides in the cytoplasm. The catalysed reaction is RX + glutathione = an S-substituted glutathione + a halide anion + H(+). It catalyses the reaction 1-chloro-2,4-dinitrobenzene + glutathione = 2,4-dinitrophenyl-S-glutathione + chloride + H(+). It carries out the reaction (13S,14S)-epoxy-(4Z,7Z,9E,11E,16Z,19Z)-docosahexaenoate + glutathione = (13R)-S-glutathionyl-(14S)-hydroxy-(4Z,7Z,9E,11E,16Z,19Z)-docosahexaenoate. The enzyme catalyses leukotriene C4 = leukotriene A4 + glutathione. Its function is as follows. Conjugation of reduced glutathione to a wide number of exogenous and endogenous hydrophobic electrophiles. Catalyzes the conjugation of leukotriene A4 with reduced glutathione (GSH) to form leukotriene C4. Can also catalyze the transfer of a glutathionyl group from glutathione (GSH) to 13(S),14(S)-epoxy-docosahexaenoic acid to form maresin conjugate in tissue regeneration 1 (MCTR1), a bioactive lipid mediator that possess potent anti-inflammatory and proresolving actions. This is Glutathione S-transferase Mu 4 (GSTM4) from Homo sapiens (Human).